The primary structure comprises 235 residues: Orotidine 5'-phosphate decarboxylase (235 aa).

Residues D12, K34, D61–T70, T116, R177, Q186, and R207 each bind substrate. The active-site Proton donor is K63.

It belongs to the OMP decarboxylase family. Type 1 subfamily. Homodimer.

It catalyses the reaction orotidine 5'-phosphate + H(+) = UMP + CO2. It functions in the pathway pyrimidine metabolism; UMP biosynthesis via de novo pathway; UMP from orotate: step 2/2. In terms of biological role, catalyzes the decarboxylation of orotidine 5'-monophosphate (OMP) to uridine 5'-monophosphate (UMP). The protein is Orotidine 5'-phosphate decarboxylase of Rhizobium leguminosarum bv. trifolii (strain WSM2304).